A 100-amino-acid chain; its full sequence is Large ribosomal subunit protein uL23 (100 aa).

The protein belongs to the universal ribosomal protein uL23 family. Part of the 50S ribosomal subunit. Contacts protein L29, and trigger factor when it is bound to the ribosome.

Functionally, one of the early assembly proteins it binds 23S rRNA. One of the proteins that surrounds the polypeptide exit tunnel on the outside of the ribosome. Forms the main docking site for trigger factor binding to the ribosome. In Vibrio campbellii (strain ATCC BAA-1116), this protein is Large ribosomal subunit protein uL23.